The following is a 162-amino-acid chain: MALFYLLAIAAALLDRVTKLLAIHYLRDGAQSIVIIPDWLKLTYAENLGIAFSVRFLPPTGLLFLTLAISAGVVWYVHKSNNRSPLFLTAFGLILGGGIGNLIDRVMLGHVVDFIYFDLYHGALFGIPLDLWPIFNVADSCITIGACMIVLFHEKIFTRKHA.

The next 2 membrane-spanning stretches (helical) occupy residues 56-76 (FLPPTGLLFLTLAISAGVVWY) and 84-104 (SPLFLTAFGLILGGGIGNLID). Active-site residues include Asp113 and Asp139. A helical transmembrane segment spans residues 132-152 (WPIFNVADSCITIGACMIVLF).

Belongs to the peptidase A8 family.

Its subcellular location is the cell inner membrane. The enzyme catalyses Release of signal peptides from bacterial membrane prolipoproteins. Hydrolyzes -Xaa-Yaa-Zaa-|-(S,diacylglyceryl)Cys-, in which Xaa is hydrophobic (preferably Leu), and Yaa (Ala or Ser) and Zaa (Gly or Ala) have small, neutral side chains.. It functions in the pathway protein modification; lipoprotein biosynthesis (signal peptide cleavage). Functionally, this protein specifically catalyzes the removal of signal peptides from prolipoproteins. This is Lipoprotein signal peptidase from Chlorobaculum tepidum (strain ATCC 49652 / DSM 12025 / NBRC 103806 / TLS) (Chlorobium tepidum).